Reading from the N-terminus, the 283-residue chain is Homeobox protein six1a (283 aa).

A DNA-binding region (homeobox) is located at residues 124 to 183 (GEETSYCFKEKSRSVLREWYTHNPYPSPREKRELAEATGLTTTQVSNWFKNRRQRDRAAE). Residues 168–264 (VSNWFKNRRQ…PLHGMQGHPH (97 aa)) are disordered. Residues 179–190 (DRAAEAKERENG) are compositionally biased toward basic and acidic residues. Residues 237–248 (MNNPAAPAYPMP) show a composition bias toward low complexity.

This sequence belongs to the SIX/Sine oculis homeobox family.

It is found in the nucleus. It localises to the cytoplasm. Functionally, transcription factor that is involved in the regulation of cell proliferation, apoptosis and embryonic development. Depending on context, functions as a transcriptional repressor or activator. Plays an important role in the development of the inner ear, where it promotes hair cell proliferation and inhibits proliferation of neural progenitor cells. Required for normal myogenesis. Plays a role in the development of fast muscle fibers throughout the body, as well as the development of craniofacial muscles. The protein is Homeobox protein six1a (six1a) of Danio rerio (Zebrafish).